Reading from the N-terminus, the 208-residue chain is N-hydroxyputrescine acetyltransferase (208 aa).

This sequence belongs to the IucB family.

The catalysed reaction is N-hydroxyputrescine + acetyl-CoA = N(1)-acetyl-N(1)-hydroxyputrescine + CoA. It participates in siderophore biosynthesis. Functionally, N-acetyltransferase involved in the biosynthesis of fimsbactin A, the major siderophore produced by A.baumannii. Catalyzes the acetylation of N-hydroxyputrescine to form N(1)-acetyl-N(1)-hydroxyputrescine (ahPutr). In Acinetobacter baumannii (strain ATCC 17978 / DSM 105126 / CIP 53.77 / LMG 1025 / NCDC KC755 / 5377), this protein is N-hydroxyputrescine acetyltransferase.